The following is a 461-amino-acid chain: Protein KlcB (461 aa).

2 disordered regions span residues 84-107 (PEATTPAARRRTKARKSKPQTEDK) and 349-379 (RAKAQEPAGQRREPVTPAKPEPEPAKDEDAP). Residues 91–101 (ARRRTKARKSK) are compositionally biased toward basic residues. Basic and acidic residues predominate over residues 357-377 (GQRREPVTPAKPEPEPAKDED).

This Escherichia coli protein is Protein KlcB (klcB).